A 467-amino-acid polypeptide reads, in one-letter code: Neutral protease 2 homolog NFIA_031120 (467 aa).

An N-terminal signal peptide occupies residues 1–19 (MKITALASAILAVVHGALA). The propeptide occupies 20 to 172 (LPARAPALDI…PASIKPLDRR (153 aa)). 2 disulfides stabilise this stretch: C179–C251 and C258–C276. Position 300 (H300) interacts with Zn(2+). E301 is a catalytic residue. H304 and D315 together coordinate Zn(2+). Positions 359-451 (WDGNSQPGQT…TMWDGSSEPG (93 aa)) are enriched in polar residues. The disordered stretch occupies residues 359-467 (WDGNSQPGQT…HTTWGNFYQA (109 aa)).

The protein belongs to the peptidase M35 family. Zn(2+) serves as cofactor.

It is found in the secreted. It catalyses the reaction Preferential cleavage of bonds with hydrophobic residues in P1'. Also 3-Asn-|-Gln-4 and 8-Gly-|-Ser-9 bonds in insulin B chain.. Functionally, secreted metalloproteinase that allows assimilation of proteinaceous substrates. Shows high activities on basic nuclear substrates such as histone and protamine. The protein is Neutral protease 2 homolog NFIA_031120 of Neosartorya fischeri (strain ATCC 1020 / DSM 3700 / CBS 544.65 / FGSC A1164 / JCM 1740 / NRRL 181 / WB 181) (Aspergillus fischerianus).